A 426-amino-acid chain; its full sequence is Glutamate-1-semialdehyde 2,1-aminomutase (426 aa).

K265 bears the N6-(pyridoxal phosphate)lysine mark.

This sequence belongs to the class-III pyridoxal-phosphate-dependent aminotransferase family. HemL subfamily. In terms of assembly, homodimer. Pyridoxal 5'-phosphate serves as cofactor.

It is found in the cytoplasm. The enzyme catalyses (S)-4-amino-5-oxopentanoate = 5-aminolevulinate. It participates in porphyrin-containing compound metabolism; protoporphyrin-IX biosynthesis; 5-aminolevulinate from L-glutamyl-tRNA(Glu): step 2/2. In Salmonella heidelberg (strain SL476), this protein is Glutamate-1-semialdehyde 2,1-aminomutase.